A 172-amino-acid chain; its full sequence is Large ribosomal subunit protein uL16 (172 aa).

Belongs to the universal ribosomal protein uL16 family.

This Methanocella arvoryzae (strain DSM 22066 / NBRC 105507 / MRE50) protein is Large ribosomal subunit protein uL16.